We begin with the raw amino-acid sequence, 177 residues long: Peptide methionine sulfoxide reductase MsrA (177 aa).

The active site involves C15.

The protein belongs to the MsrA Met sulfoxide reductase family.

It carries out the reaction L-methionyl-[protein] + [thioredoxin]-disulfide + H2O = L-methionyl-(S)-S-oxide-[protein] + [thioredoxin]-dithiol. It catalyses the reaction [thioredoxin]-disulfide + L-methionine + H2O = L-methionine (S)-S-oxide + [thioredoxin]-dithiol. Has an important function as a repair enzyme for proteins that have been inactivated by oxidation. Catalyzes the reversible oxidation-reduction of methionine sulfoxide in proteins to methionine. This is Peptide methionine sulfoxide reductase MsrA from Listeria monocytogenes serotype 4a (strain HCC23).